A 117-amino-acid chain; its full sequence is Small ribosomal subunit protein bS6 (117 aa).

Positions 96–117 (KEAAAPAPKAAPVESAPAVEAE) are disordered. Low complexity predominate over residues 99–117 (AAPAPKAAPVESAPAVEAE).

The protein belongs to the bacterial ribosomal protein bS6 family.

Its function is as follows. Binds together with bS18 to 16S ribosomal RNA. This chain is Small ribosomal subunit protein bS6, found in Geobacter sulfurreducens (strain ATCC 51573 / DSM 12127 / PCA).